Consider the following 170-residue polypeptide: Small ribosomal subunit protein uS5 (170 aa).

Residues 11 to 74 (ILEKLVHINR…ETARRVLIHV (64 aa)) form the S5 DRBM domain.

It belongs to the universal ribosomal protein uS5 family. Part of the 30S ribosomal subunit. Contacts proteins S4 and S8.

Functionally, with S4 and S12 plays an important role in translational accuracy. In terms of biological role, located at the back of the 30S subunit body where it stabilizes the conformation of the head with respect to the body. This is Small ribosomal subunit protein uS5 from Pelagibacter ubique (strain HTCC1062).